Reading from the N-terminus, the 236-residue chain is Large ribosomal subunit protein uL1 (236 aa).

It belongs to the universal ribosomal protein uL1 family. Part of the 50S ribosomal subunit.

Binds directly to 23S rRNA. The L1 stalk is quite mobile in the ribosome, and is involved in E site tRNA release. Functionally, protein L1 is also a translational repressor protein, it controls the translation of the L11 operon by binding to its mRNA. The sequence is that of Large ribosomal subunit protein uL1 from Corynebacterium jeikeium (strain K411).